We begin with the raw amino-acid sequence, 158 residues long: Transcription elongation factor GreA (158 aa).

A coiled-coil region spans residues 14–76; the sequence is LDQLKDELTH…EIESILKNVK (63 aa).

It belongs to the GreA/GreB family.

Functionally, necessary for efficient RNA polymerase transcription elongation past template-encoded arresting sites. The arresting sites in DNA have the property of trapping a certain fraction of elongating RNA polymerases that pass through, resulting in locked ternary complexes. Cleavage of the nascent transcript by cleavage factors such as GreA or GreB allows the resumption of elongation from the new 3'terminus. GreA releases sequences of 2 to 3 nucleotides. The polypeptide is Transcription elongation factor GreA (Acholeplasma laidlawii (strain PG-8A)).